The following is a 635-amino-acid chain: Threonine--tRNA ligase (635 aa).

In terms of domain architecture, TGS spans 1–61; sequence MITVRLPDGS…EKDSDLAIIT (61 aa). The tract at residues 242-533 is catalytic; sequence DHRKLGKQLD…LIEHYAGALP (292 aa). Residues cysteine 333, histidine 384, and histidine 510 each contribute to the Zn(2+) site.

Belongs to the class-II aminoacyl-tRNA synthetase family. In terms of assembly, homodimer. Requires Zn(2+) as cofactor.

It localises to the cytoplasm. It catalyses the reaction tRNA(Thr) + L-threonine + ATP = L-threonyl-tRNA(Thr) + AMP + diphosphate + H(+). Catalyzes the attachment of threonine to tRNA(Thr) in a two-step reaction: L-threonine is first activated by ATP to form Thr-AMP and then transferred to the acceptor end of tRNA(Thr). Also edits incorrectly charged L-seryl-tRNA(Thr). In Janthinobacterium sp. (strain Marseille) (Minibacterium massiliensis), this protein is Threonine--tRNA ligase.